Here is a 262-residue protein sequence, read N- to C-terminus: Nitrilase (262 aa).

A CN hydrolase domain is found at 2–237; that stretch reads VKVAYVQMNP…EEVGVAEIDL (236 aa). The Proton acceptor role is filled by Glu-42. Catalysis depends on Lys-113, which acts as the Proton donor. Cys-146 (nucleophile) is an active-site residue. 173-174 contacts substrate; the sequence is VM.

This sequence belongs to the carbon-nitrogen hydrolase superfamily. Homodimer.

It carries out the reaction a nitrile + 2 H2O = a carboxylate + NH4(+). With respect to regulation, enzymatic activity is inhibited in the presence of acetone, methanol and metal ions such as Ag(2+) and Hg(2+). Is also inhibited by various thiol reagents such as DTNB, p-chloromercuribenzoate, p-hydroxymercuribenzoate, iodacetamide and iodacetate. EDTA has no influence on activity. Nitrilase that hydrolyzes preferentially aliphatic nitriles like malononitrile and fumaronitrile in vitro. These dinitriles are converted to the corresponding monoacid mononitriles, showing the enzyme is regioselective. Cannot hydrolyze compounds with a nitrile group bound to an aromatic ring or amino acid. Its biological role is unknown. The protein is Nitrilase of Pyrococcus abyssi (strain GE5 / Orsay).